The sequence spans 570 residues: Hydroxylamine reductase (570 aa).

[4Fe-4S] cluster is bound by residues C5, C8, C17, and C23. The hybrid [4Fe-2O-2S] cluster site is built by H266, E290, C334, C425, C453, C478, E513, and K515. C425 carries the post-translational modification Cysteine persulfide.

Belongs to the HCP family. [4Fe-4S] cluster is required as a cofactor. It depends on hybrid [4Fe-2O-2S] cluster as a cofactor.

The protein localises to the cytoplasm. The catalysed reaction is A + NH4(+) + H2O = hydroxylamine + AH2 + H(+). Catalyzes the reduction of hydroxylamine to form NH(3) and H(2)O. The polypeptide is Hydroxylamine reductase (Clostridium botulinum (strain Langeland / NCTC 10281 / Type F)).